A 447-amino-acid polypeptide reads, in one-letter code: ATP-dependent protease ATPase subunit HslU (447 aa).

ATP is bound by residues Ile-18, 60–65 (GVGKTE), Asp-259, Glu-325, and Arg-397.

The protein belongs to the ClpX chaperone family. HslU subfamily. A double ring-shaped homohexamer of HslV is capped on each side by a ring-shaped HslU homohexamer. The assembly of the HslU/HslV complex is dependent on binding of ATP.

The protein resides in the cytoplasm. ATPase subunit of a proteasome-like degradation complex; this subunit has chaperone activity. The binding of ATP and its subsequent hydrolysis by HslU are essential for unfolding of protein substrates subsequently hydrolyzed by HslV. HslU recognizes the N-terminal part of its protein substrates and unfolds these before they are guided to HslV for hydrolysis. This is ATP-dependent protease ATPase subunit HslU from Burkholderia ambifaria (strain MC40-6).